The primary structure comprises 345 residues: Dihydroorotate dehydrogenase (quinone) (345 aa).

Residues 65-69 and threonine 89 contribute to the FMN site; that span reads AGLDK. Residue lysine 69 coordinates substrate. 114–118 contacts substrate; it reads NRMGF. 2 residues coordinate FMN: asparagine 142 and asparagine 175. Asparagine 175 is a substrate binding site. Serine 178 functions as the Nucleophile in the catalytic mechanism. Residue asparagine 180 coordinates substrate. Lysine 220 and threonine 248 together coordinate FMN. 249–250 provides a ligand contact to substrate; it reads NT. FMN-binding positions include glycine 271, glycine 300, and 321–322; that span reads YT.

This sequence belongs to the dihydroorotate dehydrogenase family. Type 2 subfamily. In terms of assembly, monomer. The cofactor is FMN.

Its subcellular location is the cell membrane. It carries out the reaction (S)-dihydroorotate + a quinone = orotate + a quinol. The protein operates within pyrimidine metabolism; UMP biosynthesis via de novo pathway; orotate from (S)-dihydroorotate (quinone route): step 1/1. Its function is as follows. Catalyzes the conversion of dihydroorotate to orotate with quinone as electron acceptor. This Burkholderia thailandensis (strain ATCC 700388 / DSM 13276 / CCUG 48851 / CIP 106301 / E264) protein is Dihydroorotate dehydrogenase (quinone).